Reading from the N-terminus, the 338-residue chain is Transcription factor GRA2 (338 aa).

Disordered stretches follow at residues 171-230 (CQDS…PHYA) and 256-277 (TQHEQRLPGTNEDLAEGDDGGS). Positions 174-203 (SGVSQPSNLADDTLGQGQPVSTVVQPQHPG) are enriched in polar residues. Residues 223-236 (KRQRPHYAIEKRYR) are basic motif. Residues 223-303 (KRQRPHYAIE…NQATLCIRQL (81 aa)) form the bHLH domain. The helix-loop-helix motif stretch occupies residues 237–303 (AGLQERFEAL…NQATLCIRQL (67 aa)).

It localises to the nucleus. Functionally, transcription factor that specifically regulates the expression of the gene cluster that mediates the biosynthesis of gramillins A and B, bicyclic lipopeptides that induce cell death in maize leaves but not in wheat leaves. The chain is Transcription factor GRA2 (GRA2) from Gibberella zeae (strain ATCC MYA-4620 / CBS 123657 / FGSC 9075 / NRRL 31084 / PH-1) (Wheat head blight fungus).